The chain runs to 295 residues: Indole-3-glycerol phosphate synthase (295 aa).

Belongs to the TrpC family.

It carries out the reaction 1-(2-carboxyphenylamino)-1-deoxy-D-ribulose 5-phosphate + H(+) = (1S,2R)-1-C-(indol-3-yl)glycerol 3-phosphate + CO2 + H2O. Its pathway is amino-acid biosynthesis; L-tryptophan biosynthesis; L-tryptophan from chorismate: step 4/5. The chain is Indole-3-glycerol phosphate synthase from Prochlorococcus marinus (strain MIT 9211).